Reading from the N-terminus, the 241-residue chain is MIALGVNIDHVATLRQARGTDYPSPIKAALVAEESGADAITLHLREDRRHIQEEDVIILRERLKTRMNLESAVTEEMISFACRIKPHDICLVPERREELTTEGGLDVIRHFDQVSAACKRLTEAGIRVSLFVDARADQIDAAIRVGAPVIELHTGHYADAATSEAQQAELETIRSMAAYAFSRGLQVNAGHSLHYQNTTPIAFIPEITELNIGHAIVARALFIGFAQAVREMKTLMQEARA.

N7 provides a ligand contact to 3-amino-2-oxopropyl phosphate. 9-10 (DH) provides a ligand contact to 1-deoxy-D-xylulose 5-phosphate. R18 provides a ligand contact to 3-amino-2-oxopropyl phosphate. H43 (proton acceptor) is an active-site residue. 2 residues coordinate 1-deoxy-D-xylulose 5-phosphate: R45 and H50. The Proton acceptor role is filled by E70. T100 serves as a coordination point for 1-deoxy-D-xylulose 5-phosphate. The Proton donor role is filled by H191. 3-amino-2-oxopropyl phosphate is bound by residues S192 and 213–214 (GH).

The protein belongs to the PNP synthase family. In terms of assembly, homooctamer; tetramer of dimers.

The protein resides in the cytoplasm. It carries out the reaction 3-amino-2-oxopropyl phosphate + 1-deoxy-D-xylulose 5-phosphate = pyridoxine 5'-phosphate + phosphate + 2 H2O + H(+). It participates in cofactor biosynthesis; pyridoxine 5'-phosphate biosynthesis; pyridoxine 5'-phosphate from D-erythrose 4-phosphate: step 5/5. Catalyzes the complicated ring closure reaction between the two acyclic compounds 1-deoxy-D-xylulose-5-phosphate (DXP) and 3-amino-2-oxopropyl phosphate (1-amino-acetone-3-phosphate or AAP) to form pyridoxine 5'-phosphate (PNP) and inorganic phosphate. The polypeptide is Pyridoxine 5'-phosphate synthase (Nitrosomonas eutropha (strain DSM 101675 / C91 / Nm57)).